Here is a 160-residue protein sequence, read N- to C-terminus: MIKNKKQKSYTSVYALGQYISMSAHKARRVIDQIRGRSYEEALMILELMPYRGCYPIFKLVYSAAANASHNKGFKETNLVISKAEVNQGNTVKKLKPRARGRSYPIKRSTCHITIVLEDTSFYQQYEEYLMYLKKPGYSNENRNLTCYDTYSSGGLWDKK.

Belongs to the universal ribosomal protein uL22 family. As to quaternary structure, part of the 50S ribosomal subunit.

Its subcellular location is the plastid. The protein localises to the chloroplast. In terms of biological role, this protein binds specifically to 23S rRNA. Its function is as follows. The globular domain of the protein is located near the polypeptide exit tunnel on the outside of the subunit, while an extended beta-hairpin is found that lines the wall of the exit tunnel in the center of the 70S ribosome. This chain is Large ribosomal subunit protein uL22c (rpl22), found in Arabis hirsuta (Hairy rock-cress).